The chain runs to 460 residues: tRNA (guanine(10)-N(2))-methyltransferase TRMT11 (460 aa).

Alanine 2 is modified (N-acetylalanine).

This sequence belongs to the class I-like SAM-binding methyltransferase superfamily. TRM11 methyltransferase family. Part of the heterodimeric TRMT11-TRM112 methyltransferase complex; this complex forms an active tRNA methyltransferase, where TRMT112 acts as an activator of the catalytic subunit TRMT11.

It localises to the cytoplasm. The catalysed reaction is guanosine(10) in tRNA + S-adenosyl-L-methionine = N(2)-methylguanosine(10) in tRNA + S-adenosyl-L-homocysteine + H(+). In terms of biological role, catalytic subunit of the TRMT11-TRM112 methyltransferase complex, that specifically mediates the S-adenosyl-L-methionine-dependent N(2)-methylation of guanosine nucleotide at position 10 (m2G10) in tRNAs. This is one of the major tRNA (guanine-N(2))-methyltransferases. The polypeptide is tRNA (guanine(10)-N(2))-methyltransferase TRMT11 (Mus musculus (Mouse)).